Consider the following 427-residue polypeptide: Trigger factor (427 aa).

The PPIase FKBP-type domain maps to 163–248 (GDTVVIDFVG…IHEVKAKEVP (86 aa)).

Belongs to the FKBP-type PPIase family. Tig subfamily.

The protein resides in the cytoplasm. It catalyses the reaction [protein]-peptidylproline (omega=180) = [protein]-peptidylproline (omega=0). In terms of biological role, involved in protein export. Acts as a chaperone by maintaining the newly synthesized protein in an open conformation. Functions as a peptidyl-prolyl cis-trans isomerase. This Streptococcus pneumoniae (strain ATCC 700669 / Spain 23F-1) protein is Trigger factor.